The sequence spans 133 residues: Small ribosomal subunit protein uS8 (133 aa).

The protein belongs to the universal ribosomal protein uS8 family. In terms of assembly, part of the 30S ribosomal subunit. Contacts proteins S5 and S12.

Functionally, one of the primary rRNA binding proteins, it binds directly to 16S rRNA central domain where it helps coordinate assembly of the platform of the 30S subunit. This chain is Small ribosomal subunit protein uS8, found in Synechococcus sp. (strain CC9605).